The sequence spans 105 residues: Small ribosomal subunit protein uS10 (105 aa).

This sequence belongs to the universal ribosomal protein uS10 family. Part of the 30S ribosomal subunit.

Its function is as follows. Involved in the binding of tRNA to the ribosomes. The chain is Small ribosomal subunit protein uS10 from Arthrospira platensis (Spirulina platensis).